Consider the following 438-residue polypeptide: uncharacterized protein (438 aa).

The signal sequence occupies residues 1–19 (MKKLLLAASIICLASAGLA).

This is an uncharacterized protein from Rickettsia conorii (strain ATCC VR-613 / Malish 7).